We begin with the raw amino-acid sequence, 386 residues long: Phosphoglycerate kinase (386 aa).

Substrate is bound by residues 21 to 23 (DLN), Arg-36, 59 to 62 (HLGR), Arg-112, and Arg-145. ATP contacts are provided by residues Lys-196, Glu-313, and 339–342 (GGDT).

It belongs to the phosphoglycerate kinase family. As to quaternary structure, monomer.

It is found in the cytoplasm. The enzyme catalyses (2R)-3-phosphoglycerate + ATP = (2R)-3-phospho-glyceroyl phosphate + ADP. The protein operates within carbohydrate degradation; glycolysis; pyruvate from D-glyceraldehyde 3-phosphate: step 2/5. This is Phosphoglycerate kinase from Haemophilus influenzae (strain PittGG).